The chain runs to 184 residues: ATP-dependent protease subunit HslV (184 aa).

The active site involves Thr-12. Na(+) is bound by residues Ala-166, Cys-169, and Thr-172.

It belongs to the peptidase T1B family. HslV subfamily. As to quaternary structure, a double ring-shaped homohexamer of HslV is capped on each side by a ring-shaped HslU homohexamer. The assembly of the HslU/HslV complex is dependent on binding of ATP.

The protein resides in the cytoplasm. It catalyses the reaction ATP-dependent cleavage of peptide bonds with broad specificity.. Allosterically activated by HslU binding. Protease subunit of a proteasome-like degradation complex believed to be a general protein degrading machinery. In Brucella abortus (strain S19), this protein is ATP-dependent protease subunit HslV.